The primary structure comprises 417 residues: Glutamyl-tRNA reductase (417 aa).

Substrate-binding positions include 49–52, Ser105, 110–112, and Gln116; these read TCNR and EPQ. The active-site Nucleophile is the Cys50. NADP(+) is bound at residue 185–190; it reads GAGEMI.

The protein belongs to the glutamyl-tRNA reductase family. Homodimer.

It carries out the reaction (S)-4-amino-5-oxopentanoate + tRNA(Glu) + NADP(+) = L-glutamyl-tRNA(Glu) + NADPH + H(+). It functions in the pathway porphyrin-containing compound metabolism; protoporphyrin-IX biosynthesis; 5-aminolevulinate from L-glutamyl-tRNA(Glu): step 1/2. In terms of biological role, catalyzes the NADPH-dependent reduction of glutamyl-tRNA(Glu) to glutamate 1-semialdehyde (GSA). The polypeptide is Glutamyl-tRNA reductase (Azoarcus sp. (strain BH72)).